A 92-amino-acid chain; its full sequence is PqqA binding protein (92 aa).

It belongs to the PqqD family. In terms of assembly, monomer. Interacts with PqqE.

The protein operates within cofactor biosynthesis; pyrroloquinoline quinone biosynthesis. In terms of biological role, functions as a PqqA binding protein and presents PqqA to PqqE, in the pyrroloquinoline quinone (PQQ) biosynthetic pathway. This Xanthomonas oryzae pv. oryzae (strain PXO99A) protein is PqqA binding protein.